We begin with the raw amino-acid sequence, 445 residues long: 6-phosphogluconate dehydrogenase, decarboxylating (445 aa).

NADP(+)-binding positions include 1 to 4 (AVMG), 22 to 24 (NRS), 63 to 65 (VKA), and Asn91. Residues Asn91 and 117 to 119 (SGG) contribute to the substrate site. Lys172 functions as the Proton acceptor in the catalytic mechanism. A substrate-binding site is contributed by 175–176 (HN). Glu179 serves as the catalytic Proton donor. Substrate-binding residues include Tyr180, Lys249, Arg276, Arg434, and His440.

It belongs to the 6-phosphogluconate dehydrogenase family. In terms of assembly, homodimer.

The enzyme catalyses 6-phospho-D-gluconate + NADP(+) = D-ribulose 5-phosphate + CO2 + NADPH. It functions in the pathway carbohydrate degradation; pentose phosphate pathway; D-ribulose 5-phosphate from D-glucose 6-phosphate (oxidative stage): step 3/3. Functionally, catalyzes the oxidative decarboxylation of 6-phosphogluconate to ribulose 5-phosphate and CO(2), with concomitant reduction of NADP to NADPH. This Shigella boydii protein is 6-phosphogluconate dehydrogenase, decarboxylating (gnd).